The primary structure comprises 468 residues: 3-isopropylmalate dehydratase large subunit (468 aa).

Cysteine 349, cysteine 409, and cysteine 412 together coordinate [4Fe-4S] cluster.

Belongs to the aconitase/IPM isomerase family. LeuC type 1 subfamily. As to quaternary structure, heterodimer of LeuC and LeuD. [4Fe-4S] cluster serves as cofactor.

The catalysed reaction is (2R,3S)-3-isopropylmalate = (2S)-2-isopropylmalate. The protein operates within amino-acid biosynthesis; L-leucine biosynthesis; L-leucine from 3-methyl-2-oxobutanoate: step 2/4. In terms of biological role, catalyzes the isomerization between 2-isopropylmalate and 3-isopropylmalate, via the formation of 2-isopropylmaleate. The chain is 3-isopropylmalate dehydratase large subunit from Shewanella baltica (strain OS185).